A 197-amino-acid polypeptide reads, in one-letter code: Dephospho-CoA kinase (197 aa).

In terms of domain architecture, DPCK spans 2-197; the sequence is IIGITGGIAS…SALLSLANPR (196 aa). ATP is bound at residue 10–15; it reads ASGKST.

Belongs to the CoaE family.

The protein localises to the cytoplasm. It catalyses the reaction 3'-dephospho-CoA + ATP = ADP + CoA + H(+). It participates in cofactor biosynthesis; coenzyme A biosynthesis; CoA from (R)-pantothenate: step 5/5. In terms of biological role, catalyzes the phosphorylation of the 3'-hydroxyl group of dephosphocoenzyme A to form coenzyme A. This is Dephospho-CoA kinase from Streptococcus pyogenes serotype M28 (strain MGAS6180).